Consider the following 261-residue polypeptide: Cytochrome c oxidase subunit 3 (261 aa).

The Mitochondrial matrix portion of the chain corresponds to 1–15 (MTHQTHAYHMVNPSP). The helical transmembrane segment at 16–34 (WPLTGALSALLLTSGLMMW) threads the bilayer. The Mitochondrial intermembrane segment spans residues 35–40 (FHFNNP). The chain crosses the membrane as a helical span at residues 41–66 (TLLVLGLLTNLISSYQWWRDIVREGT). The Mitochondrial matrix segment spans residues 67 to 72 (YQGHHT). Residues 73–105 (KVVQKGLRYGMVLFIISEVFFFLGFFWAFYHSS) traverse the membrane as a helical segment. Topologically, residues 106-128 (LAPTPELGGCWPPTGISPLNPLE) are mitochondrial intermembrane. Residues 129–152 (VPLLNTSILLASGVSITWSHHSLM) traverse the membrane as a helical segment. Residues 153–155 (EGN) are Mitochondrial matrix-facing. The chain crosses the membrane as a helical span at residues 156–183 (RKQMIQALMITIALGLYFTALQAMEYYE). The Mitochondrial intermembrane portion of the chain corresponds to 184–190 (SSFTISD). The helical transmembrane segment at 191–223 (GVYGSTFFVATGFHGLHVIIGTTFLITCLLRQL) threads the bilayer. Residues 224-232 (LYHFTSNHH) lie on the Mitochondrial matrix side of the membrane. Residues 233-256 (FGFEAAAWYWHFVDVVWLFLYVSI) traverse the membrane as a helical segment. Topologically, residues 257–261 (YWWGS) are mitochondrial intermembrane.

The protein belongs to the cytochrome c oxidase subunit 3 family. As to quaternary structure, component of the cytochrome c oxidase (complex IV, CIV), a multisubunit enzyme composed of 14 subunits. The complex is composed of a catalytic core of 3 subunits MT-CO1, MT-CO2 and MT-CO3, encoded in the mitochondrial DNA, and 11 supernumerary subunits COX4I, COX5A, COX5B, COX6A, COX6B, COX6C, COX7A, COX7B, COX7C, COX8 and NDUFA4, which are encoded in the nuclear genome. The complex exists as a monomer or a dimer and forms supercomplexes (SCs) in the inner mitochondrial membrane with NADH-ubiquinone oxidoreductase (complex I, CI) and ubiquinol-cytochrome c oxidoreductase (cytochrome b-c1 complex, complex III, CIII), resulting in different assemblies (supercomplex SCI(1)III(2)IV(1) and megacomplex MCI(2)III(2)IV(2)).

It localises to the mitochondrion inner membrane. It catalyses the reaction 4 Fe(II)-[cytochrome c] + O2 + 8 H(+)(in) = 4 Fe(III)-[cytochrome c] + 2 H2O + 4 H(+)(out). Functionally, component of the cytochrome c oxidase, the last enzyme in the mitochondrial electron transport chain which drives oxidative phosphorylation. The respiratory chain contains 3 multisubunit complexes succinate dehydrogenase (complex II, CII), ubiquinol-cytochrome c oxidoreductase (cytochrome b-c1 complex, complex III, CIII) and cytochrome c oxidase (complex IV, CIV), that cooperate to transfer electrons derived from NADH and succinate to molecular oxygen, creating an electrochemical gradient over the inner membrane that drives transmembrane transport and the ATP synthase. Cytochrome c oxidase is the component of the respiratory chain that catalyzes the reduction of oxygen to water. Electrons originating from reduced cytochrome c in the intermembrane space (IMS) are transferred via the dinuclear copper A center (CU(A)) of subunit 2 and heme A of subunit 1 to the active site in subunit 1, a binuclear center (BNC) formed by heme A3 and copper B (CU(B)). The BNC reduces molecular oxygen to 2 water molecules using 4 electrons from cytochrome c in the IMS and 4 protons from the mitochondrial matrix. This chain is Cytochrome c oxidase subunit 3 (MT-CO3), found in Tachyglossus aculeatus aculeatus (Southeast Australian short-beaked echidna).